The sequence spans 411 residues: Arginine deiminase 1 (411 aa).

The active-site Amidino-cysteine intermediate is C401.

Belongs to the arginine deiminase family.

It localises to the cytoplasm. The catalysed reaction is L-arginine + H2O = L-citrulline + NH4(+). The protein operates within amino-acid degradation; L-arginine degradation via ADI pathway; carbamoyl phosphate from L-arginine: step 1/2. This chain is Arginine deiminase 1 (arcA1), found in Staphylococcus epidermidis (strain ATCC 12228 / FDA PCI 1200).